Here is a 344-residue protein sequence, read N- to C-terminus: Probable dual-specificity RNA methyltransferase RlmN (344 aa).

The active-site Proton acceptor is the glutamate 92. The 228-residue stretch at 98–325 (DEDRATLCVS…TTIRASRGED (228 aa)) folds into the Radical SAM core domain. A disulfide bridge links cysteine 105 with cysteine 330. 3 residues coordinate [4Fe-4S] cluster: cysteine 112, cysteine 116, and cysteine 119. Residues 157–158 (GE), serine 189, 211–213 (SLH), and histidine 287 contribute to the S-adenosyl-L-methionine site. The active-site S-methylcysteine intermediate is the cysteine 330.

Belongs to the radical SAM superfamily. RlmN family. [4Fe-4S] cluster is required as a cofactor.

The protein resides in the cytoplasm. The enzyme catalyses adenosine(2503) in 23S rRNA + 2 reduced [2Fe-2S]-[ferredoxin] + 2 S-adenosyl-L-methionine = 2-methyladenosine(2503) in 23S rRNA + 5'-deoxyadenosine + L-methionine + 2 oxidized [2Fe-2S]-[ferredoxin] + S-adenosyl-L-homocysteine. The catalysed reaction is adenosine(37) in tRNA + 2 reduced [2Fe-2S]-[ferredoxin] + 2 S-adenosyl-L-methionine = 2-methyladenosine(37) in tRNA + 5'-deoxyadenosine + L-methionine + 2 oxidized [2Fe-2S]-[ferredoxin] + S-adenosyl-L-homocysteine. In terms of biological role, specifically methylates position 2 of adenine 2503 in 23S rRNA and position 2 of adenine 37 in tRNAs. The sequence is that of Probable dual-specificity RNA methyltransferase RlmN from Bacteroides fragilis (strain ATCC 25285 / DSM 2151 / CCUG 4856 / JCM 11019 / LMG 10263 / NCTC 9343 / Onslow / VPI 2553 / EN-2).